The sequence spans 212 residues: Ribonuclease HII (212 aa).

Residues 20 to 209 form the RNase H type-2 domain; the sequence is TCVVGVDEVG…VHNILYQEAS (190 aa). The a divalent metal cation site is built by aspartate 26, glutamate 27, and aspartate 117.

The protein belongs to the RNase HII family. The cofactor is Mn(2+). It depends on Mg(2+) as a cofactor.

Its subcellular location is the cytoplasm. The catalysed reaction is Endonucleolytic cleavage to 5'-phosphomonoester.. In terms of biological role, endonuclease that specifically degrades the RNA of RNA-DNA hybrids. The polypeptide is Ribonuclease HII (Cereibacter sphaeroides (strain ATCC 17023 / DSM 158 / JCM 6121 / CCUG 31486 / LMG 2827 / NBRC 12203 / NCIMB 8253 / ATH 2.4.1.) (Rhodobacter sphaeroides)).